The sequence spans 460 residues: tRNA modification GTPase MnmE (460 aa).

3 residues coordinate (6S)-5-formyl-5,6,7,8-tetrahydrofolate: R29, E89, and R128. A TrmE-type G domain is found at 224–382 (GVPTVIIGKP…LKQNLLEIIQ (159 aa)). K(+) is bound at residue N234. GTP-binding positions include 234–239 (NAGKST), 253–259 (SEIAGTT), and 278–281 (DTAG). S238 contacts Mg(2+). S253, I255, and T258 together coordinate K(+). Mg(2+) is bound at residue T259. K460 lines the (6S)-5-formyl-5,6,7,8-tetrahydrofolate pocket.

Belongs to the TRAFAC class TrmE-Era-EngA-EngB-Septin-like GTPase superfamily. TrmE GTPase family. Homodimer. Heterotetramer of two MnmE and two MnmG subunits. K(+) serves as cofactor.

It localises to the cytoplasm. Its function is as follows. Exhibits a very high intrinsic GTPase hydrolysis rate. Involved in the addition of a carboxymethylaminomethyl (cmnm) group at the wobble position (U34) of certain tRNAs, forming tRNA-cmnm(5)s(2)U34. This chain is tRNA modification GTPase MnmE, found in Cytophaga hutchinsonii (strain ATCC 33406 / DSM 1761 / CIP 103989 / NBRC 15051 / NCIMB 9469 / D465).